Consider the following 744-residue polypeptide: MTISNLIRSRCSLAAAKSFLENVKSFSSHATFAEHKQLEKIRNIGISAHIDSGKTTLTERILFYTGRIKEMHEVKGKDNVGATMDSMELERQRGITIQSAATYTIWKDHNINIIDTPGHVDFTVEVERALRVLDGAVLVLCSVGGVQSQTLTVNRQMKRYNVPCLAFINKLDRSGANPYRVLGQMRSKLNHNAAFVQLPIGVESNCKGVIDLVKQRALYFEEPYGLKIREDEIPADMRTESAERRQELIEHLSNVDEKIGELFLEEREATVEDIMGAIRRSTLKRAFTPVLVGTALKNKGVQPLLDAVLDYLPHPGEVENVALVEKKDEEPQKVPLNPARDGKDPFVGLAFKLEAGRFGQLTYLRCYQGVLRKGDNIFNTRSGKKIRLARLVRLHSNQMEDVNEVYAGDIFALFGVDCASGDTFVTNPKLELSMESIFVPDPVVSMAIKPTNSKDRDNFAKAIARFTKEDPTFHFEYDADVKETLVSGMGELHLEIYAQRMEREYNCPVTLGKPKVAFRETLIGPCEFDYLHKKQSGGQGQYARVSGILEPLPPHQNTTIEFVDETMGTNVPKQFIPGIEKGFRQMAEKGLLSGHKLSGIKFRLQDGAHHIVDSSELAFMLAAQGAIKSVFENGSWQILEPIMMVEVTAPEEFQGTVIGQLNKRHGIITGTEGAEGWFTVYAEVPLNDMFGYAGELRSSTQGKGEFSMEYSRYSPCMPEVQEKLCHEYQVSQGLVVDKKQKKKN.

The transit peptide at 1-33 (MTISNLIRSRCSLAAAKSFLENVKSFSSHATFA) directs the protein to the mitochondrion. One can recognise a tr-type G domain in the interval 39-317 (EKIRNIGISA…VLDYLPHPGE (279 aa)). Residues 48 to 55 (AHIDSGKT), 115 to 119 (DTPGH), and 169 to 172 (NKLD) each bind GTP.

Belongs to the TRAFAC class translation factor GTPase superfamily. Classic translation factor GTPase family. EF-G/EF-2 subfamily.

The protein resides in the mitochondrion. It participates in protein biosynthesis; polypeptide chain elongation. In terms of biological role, mitochondrial GTPase that catalyzes the GTP-dependent ribosomal translocation step during translation elongation. During this step, the ribosome changes from the pre-translocational (PRE) to the post-translocational (POST) state as the newly formed A-site-bound peptidyl-tRNA and P-site-bound deacylated tRNA move to the P and E sites, respectively. Catalyzes the coordinated movement of the two tRNA molecules, the mRNA and conformational changes in the ribosome. The polypeptide is Elongation factor G, mitochondrial (Anopheles gambiae (African malaria mosquito)).